Reading from the N-terminus, the 693-residue chain is Endoprotease bli (693 aa).

Residues 1 to 20 (MYWQLVRILVLFDCLQKILA) form the signal peptide. Positions 21–116 (IEHDSICIAD…EQRPRVRRKR (96 aa)) are cleaved as a propeptide — inhibition peptide. A Ca(2+)-binding site is contributed by Asp161. In terms of domain architecture, Peptidase S8 spans 167 to 482 (QWYLNNGAQG…YGLMDAGALV (316 aa)). Asn194 carries an N-linked (GlcNAc...) asparagine glycan. Asp201 serves as the catalytic Charge relay system. Position 202 (Asp202) interacts with substrate. Asp210, Asp222, Asp227, and Asp229 together coordinate Ca(2+). The interval 215-242 (YDPLASTDINGHDDDPTPQDDGDNKHGT) is disordered. Substrate is bound at residue 237 to 238 (DN). The active-site Charge relay system is the His240. Ca(2+) contacts are provided by Ile251, Asn254, Tyr256, and Gly258. 2 cysteine pairs are disulfide-bonded: Cys257/Cys406 and Cys349/Cys379. Residues Glu282, 299–304 (SWGPED), Asp310, and 338–341 (ASGN) contribute to the substrate site. Asp304 lines the Ca(2+) pocket. A Ca(2+)-binding site is contributed by Asp347. Asp352 and Tyr354 together coordinate substrate. Glu377 is a Ca(2+) binding site. The active-site Charge relay system is the Ser414. Ser414 serves as a coordination point for substrate. 2 N-linked (GlcNAc...) asparagine glycosylation sites follow: Asn433 and Asn518. One can recognise a P/Homo B domain in the interval 490–628 (TVPEQHICTY…SLLLYGTAEP (139 aa)). Cys497 and Cys526 form a disulfide bridge. The disordered stretch occupies residues 629 to 693 (AQPNDPRHSS…LVSAQPELRV (65 aa)). Residues 668–681 (DSRDWQPKKVENKK) are compositionally biased toward basic and acidic residues.

Belongs to the peptidase S8 family. Furin subfamily. Ca(2+) is required as a cofactor. N-glycosylated. Post-translationally, the inhibition peptide, which plays the role of an intramolecular chaperone, is probably autocatalytically removed in the endoplasmic reticulum (ER) and remains non-covalently bound as a potent autoinhibitor. Probably following transport to the trans Golgi, a second cleavage within the inhibition propeptide results in propeptide dissociation and bli activation.

It is found in the secreted. It catalyses the reaction Release of mature proteins from their proproteins by cleavage of -Arg-Xaa-Yaa-Arg-|-Zaa- bonds, where Xaa can be any amino acid and Yaa is Arg or Lys. Releases albumin, complement component C3 and von Willebrand factor from their respective precursors.. Inhibited by the propeptide before the second cleavage. Inhibited by ethylenediaminetetraacetic acid (EDTA), ZnSO(4) and chloroketone DEC-RVKR-CMK. Functionally, serine endoprotease which cleaves substrates at the RX(K/R)R consensus motif. The chain is Endoprotease bli from Onchocerca volvulus.